We begin with the raw amino-acid sequence, 224 residues long: Cytidylate kinase (224 aa).

Residue 11-19 (GPAAAGKST) coordinates ATP.

The protein belongs to the cytidylate kinase family. Type 1 subfamily.

Its subcellular location is the cytoplasm. It catalyses the reaction CMP + ATP = CDP + ADP. The catalysed reaction is dCMP + ATP = dCDP + ADP. This Listeria monocytogenes serotype 4b (strain CLIP80459) protein is Cytidylate kinase.